Consider the following 268-residue polypeptide: UPF0328 protein ECU09_2030 (268 aa).

Belongs to the UPF0328 family.

This is UPF0328 protein ECU09_2030 from Encephalitozoon cuniculi (strain GB-M1) (Microsporidian parasite).